We begin with the raw amino-acid sequence, 348 residues long: Nicotinate-nucleotide--dimethylbenzimidazole phosphoribosyltransferase (348 aa).

Glu-316 acts as the Proton acceptor in catalysis.

It belongs to the CobT family.

The catalysed reaction is 5,6-dimethylbenzimidazole + nicotinate beta-D-ribonucleotide = alpha-ribazole 5'-phosphate + nicotinate + H(+). It participates in nucleoside biosynthesis; alpha-ribazole biosynthesis; alpha-ribazole from 5,6-dimethylbenzimidazole: step 1/2. Functionally, catalyzes the synthesis of alpha-ribazole-5'-phosphate from nicotinate mononucleotide (NAMN) and 5,6-dimethylbenzimidazole (DMB). This Xanthomonas axonopodis pv. citri (strain 306) protein is Nicotinate-nucleotide--dimethylbenzimidazole phosphoribosyltransferase.